The chain runs to 347 residues: GMP reductase (347 aa).

108 to 131 lines the NADP(+) pocket; that stretch reads ADFEKTVQILALNPALNFVCIDVA. Glycine 181 and glycine 183 together coordinate K(+). Cysteine 186 functions as the Thioimidate intermediate in the catalytic mechanism. 216–239 provides a ligand contact to NADP(+); that stretch reads IVSDGGCTMPGDVAKAFGGGADFV.

It belongs to the IMPDH/GMPR family. GuaC type 1 subfamily. As to quaternary structure, homotetramer.

The enzyme catalyses IMP + NH4(+) + NADP(+) = GMP + NADPH + 2 H(+). Catalyzes the irreversible NADPH-dependent deamination of GMP to IMP. It functions in the conversion of nucleobase, nucleoside and nucleotide derivatives of G to A nucleotides, and in maintaining the intracellular balance of A and G nucleotides. This chain is GMP reductase, found in Salmonella paratyphi C (strain RKS4594).